Here is a 445-residue protein sequence, read N- to C-terminus: Tubulin beta chain (445 aa).

Positions 1 to 4 (MREI) match the MREI motif motif. Glutamine 11 provides a ligand contact to GTP. Serine 40 is subject to Phosphoserine. Lysine 58 carries the post-translational modification N6-acetyllysine; alternate. Residue lysine 58 is modified to N6-succinyllysine; alternate. Residue lysine 58 forms a Glycyl lysine isopeptide (Lys-Gly) (interchain with G-Cter in ubiquitin); alternate linkage. The GTP site is built by glutamate 69, serine 138, glycine 142, threonine 143, and glycine 144. Glutamate 69 is a Mg(2+) binding site. The residue at position 172 (serine 172) is a Phosphoserine; by CDK1. GTP is bound by residues asparagine 204 and asparagine 226. A phosphothreonine mark is found at threonine 285 and threonine 290. Residue arginine 318 is modified to Omega-N-methylarginine. A Glycyl lysine isopeptide (Lys-Gly) (interchain with G-Cter in ubiquitin) cross-link involves residue lysine 324. Residues 424 to 445 (QYQDATADEQGEFEEEGEEDEA) are disordered. The segment covering 429-445 (TADEQGEFEEEGEEDEA) has biased composition (acidic residues). Glutamate 438 carries the 5-glutamyl polyglutamate modification.

The protein belongs to the tubulin family. In terms of assembly, dimer of alpha and beta chains. A typical microtubule is a hollow water-filled tube with an outer diameter of 25 nm and an inner diameter of 15 nM. Alpha-beta heterodimers associate head-to-tail to form protofilaments running lengthwise along the microtubule wall with the beta-tubulin subunit facing the microtubule plus end conferring a structural polarity. Microtubules usually have 13 protofilaments but different protofilament numbers can be found in some organisms and specialized cells. Interacts with NCKAP5L. Mg(2+) serves as cofactor. Post-translationally, some glutamate residues at the C-terminus are polyglycylated, resulting in polyglycine chains on the gamma-carboxyl group. Glycylation is mainly limited to tubulin incorporated into axonemes (cilia and flagella) whereas glutamylation is prevalent in neuronal cells, centrioles, axonemes, and the mitotic spindle. Both modifications can coexist on the same protein on adjacent residues, and lowering polyglycylation levels increases polyglutamylation, and reciprocally. Cilia and flagella glycylation is required for their stability and maintenance. Flagella glycylation controls sperm motility. In terms of processing, some glutamate residues at the C-terminus are polyglutamylated, resulting in polyglutamate chains on the gamma-carboxyl group. Polyglutamylation plays a key role in microtubule severing by spastin (SPAST). SPAST preferentially recognizes and acts on microtubules decorated with short polyglutamate tails: severing activity by SPAST increases as the number of glutamates per tubulin rises from one to eight, but decreases beyond this glutamylation threshold. Phosphorylated on Ser-172 by CDK1 during the cell cycle, from metaphase to telophase, but not in interphase. This phosphorylation inhibits tubulin incorporation into microtubules.

It localises to the cytoplasm. The protein localises to the cytoskeleton. Tubulin is the major constituent of microtubules, a cylinder consisting of laterally associated linear protofilaments composed of alpha- and beta-tubulin heterodimers. Microtubules grow by the addition of GTP-tubulin dimers to the microtubule end, where a stabilizing cap forms. Below the cap, tubulin dimers are in GDP-bound state, owing to GTPase activity of alpha-tubulin. The sequence is that of Tubulin beta chain from Sus scrofa (Pig).